We begin with the raw amino-acid sequence, 333 residues long: 1,5-anhydro-D-fructose reductase (333 aa).

NADP(+) contacts are provided by residues 9–12 (ASTI), 33–34 (SS), arginine 38, 71–76 (TTNELH), 93–94 (EK), asparagine 120, 162–163 (WR), and tyrosine 283.

This sequence belongs to the Gfo/Idh/MocA family. Monomer.

The enzyme catalyses 1,5-anhydro-D-mannitol + NADP(+) = 1,5-anhydro-D-fructose + NADPH + H(+). In terms of biological role, catalyzes the NADPH-specific reduction of 1,5-anhydro-D-fructose to 1,5-anhydro-D-mannitol. This Rhizobium meliloti (strain 1021) (Ensifer meliloti) protein is 1,5-anhydro-D-fructose reductase (afr).